The sequence spans 427 residues: Enolase (427 aa).

Residue Gln163 coordinates (2R)-2-phosphoglycerate. The active-site Proton donor is the Glu205. 3 residues coordinate Mg(2+): Asp242, Glu285, and Asp312. (2R)-2-phosphoglycerate is bound by residues Lys337, Arg366, Ser367, and Lys388. Catalysis depends on Lys337, which acts as the Proton acceptor.

This sequence belongs to the enolase family. It depends on Mg(2+) as a cofactor.

The protein localises to the cytoplasm. It localises to the secreted. It is found in the cell surface. It carries out the reaction (2R)-2-phosphoglycerate = phosphoenolpyruvate + H2O. Its pathway is carbohydrate degradation; glycolysis; pyruvate from D-glyceraldehyde 3-phosphate: step 4/5. Catalyzes the reversible conversion of 2-phosphoglycerate (2-PG) into phosphoenolpyruvate (PEP). It is essential for the degradation of carbohydrates via glycolysis. This Methylocella silvestris (strain DSM 15510 / CIP 108128 / LMG 27833 / NCIMB 13906 / BL2) protein is Enolase.